Here is a 562-residue protein sequence, read N- to C-terminus: NAD-dependent malic enzyme (562 aa).

Y101 functions as the Proton donor in the catalytic mechanism. Position 154 (R154) interacts with NAD(+). Residue K172 is the Proton acceptor of the active site. A divalent metal cation-binding residues include E243, D244, and D267. NAD(+)-binding residues include D267 and N415.

Belongs to the malic enzymes family. Homotetramer. It depends on Mg(2+) as a cofactor. The cofactor is Mn(2+).

The enzyme catalyses (S)-malate + NAD(+) = pyruvate + CO2 + NADH. The catalysed reaction is oxaloacetate + H(+) = pyruvate + CO2. The polypeptide is NAD-dependent malic enzyme (Shewanella putrefaciens (strain CN-32 / ATCC BAA-453)).